The chain runs to 281 residues: 3-methyl-2-oxobutanoate hydroxymethyltransferase (281 aa).

D44 and D83 together coordinate Mg(2+). Residues 44–45 (DS), D83, and K112 contribute to the 3-methyl-2-oxobutanoate site. E114 contacts Mg(2+). The Proton acceptor role is filled by E180. The disordered stretch occupies residues 251–281 (RNGTFPGPEHSSRMDPAELAAALGSQDQATE).

It belongs to the PanB family. Homodecamer; pentamer of dimers. It depends on Mg(2+) as a cofactor.

It is found in the cytoplasm. The catalysed reaction is 3-methyl-2-oxobutanoate + (6R)-5,10-methylene-5,6,7,8-tetrahydrofolate + H2O = 2-dehydropantoate + (6S)-5,6,7,8-tetrahydrofolate. It participates in cofactor biosynthesis; (R)-pantothenate biosynthesis; (R)-pantoate from 3-methyl-2-oxobutanoate: step 1/2. Functionally, catalyzes the reversible reaction in which hydroxymethyl group from 5,10-methylenetetrahydrofolate is transferred onto alpha-ketoisovalerate to form ketopantoate. In Chloroflexus aurantiacus (strain ATCC 29364 / DSM 637 / Y-400-fl), this protein is 3-methyl-2-oxobutanoate hydroxymethyltransferase.